Consider the following 128-residue polypeptide: GESRAEKFQRQHMDSGSSPSSSSTYCNQMMKLRNMTQGSCKSVNTFVHEPLVDVQNVCFQEKVTCKNGQTNCFKSNSRMHITECRLTNGSKYPNCAYGTSPKERHIIVACEGSPYVPVHFDDSVEDST.

Residues 1 to 13 (GESRAEKFQRQHM) show a composition bias toward basic and acidic residues. A disordered region spans residues 1-24 (GESRAEKFQRQHMDSGSSPSSSST). Residues lysine 7 and arginine 10 each coordinate substrate. Catalysis depends on histidine 12, which acts as the Proton acceptor. 4 disulfide bridges follow: cysteine 26–cysteine 84, cysteine 40–cysteine 95, cysteine 58–cysteine 110, and cysteine 65–cysteine 72. The N-linked (GlcNAc...) asparagine glycan is linked to asparagine 34. Residues 41-45 (KSVNT), lysine 66, and arginine 85 contribute to the substrate site. The active-site Proton donor is histidine 119.

The protein belongs to the pancreatic ribonuclease family. In terms of assembly, monomer. Interacts with and forms tight 1:1 complexes with RNH1. Dimerization of two such complexes may occur. Interaction with RNH1 inhibits this protein. In terms of tissue distribution, pancreas and other tissues and body fluids (indicating it may have other physiological functions besides its role in digestion).

Its subcellular location is the secreted. The catalysed reaction is an [RNA] containing cytidine + H2O = an [RNA]-3'-cytidine-3'-phosphate + a 5'-hydroxy-ribonucleotide-3'-[RNA].. It catalyses the reaction an [RNA] containing uridine + H2O = an [RNA]-3'-uridine-3'-phosphate + a 5'-hydroxy-ribonucleotide-3'-[RNA].. Functionally, endonuclease that catalyzes the cleavage of RNA on the 3' side of pyrimidine nucleotides. Acts on single-stranded and double-stranded RNA. This chain is Ribonuclease pancreatic (RNASE1), found in Semnopithecus entellus (Northern plains gray langur).